The primary structure comprises 1084 residues: Transcription elongation factor SPT5 (1084 aa).

Positions 1–91 (MSDSEDSDFS…DDEYEDEDPW (91 aa)) are disordered. 3 stretches are compositionally biased toward acidic residues: residues 20 to 32 (AEEV…EEEQ), 41 to 62 (AEEE…EEDD), and 77 to 91 (DEAD…EDPW). Residues 175-269 (DPNLWTVKCK…TDVLKVVKEV (95 aa)) form an interaction with SUPT4H1 region. 4 KOW domains span residues 272-305 (LKPK…ISLK), 419-450 (LQAG…ITIM), 471-502 (FRMG…VILF), and 593-626 (IHVK…LHCK). Positions 312–419 (LDRIKARMSM…TTGKEREHNL (108 aa)) are interaction with RNA polymerase II. The residue at position 665 (Ser-665) is a Phosphoserine. The disordered stretch occupies residues 667–700 (RISSPMHPGGGGQPQRGGGGGGGGGMGRGRGRRD). Residues 674–694 (PGGGGQPQRGGGGGGGGGMGR) show a composition bias toward gly residues. A KOW 5 domain is found at 702–735 (DLIGQTVRISQGPYKGYIGVVKDATESTARVELH). The segment at 748 to 973 (LTTVGGKERQ…HTPGSNIDQA (226 aa)) is disordered. The CTR1-1; approximate repeat unit spans residues 758–763 (GRSSTH). The tract at residues 758–815 (GRSSTHLRTPMYGSQTPIYGTGSRTPMYGSQTPLHDGSRTPHYGSQTPLHDGSRTPGQ) is 8 X 7 AA approximate tandem repeats of G-S-[QR]-T-P-X-[YQ], motif CTR1. Residues 759-790 (RSSTHLRTPMYGSQTPIYGTGSRTPMYGSQTP) are compositionally biased toward polar residues. One copy of the CTR1-2; approximate repeat lies at 764-769 (LRTPMY). The CTR1-3 repeat unit spans residues 770 to 776 (GSQTPIY). 2 positions are modified to phosphothreonine; by CDK9: Thr-773 and Thr-782. A CTR1-4 repeat occupies 779–785 (GSRTPMY). The CTR1-5 repeat unit spans residues 786–792 (GSQTPLH). Residues 794-800 (GSRTPHY) form a CTR1-6 repeat. The CTR1-7 repeat unit spans residues 801–807 (GSQTPLH). One copy of the CTR1-8 repeat lies at 809–815 (GSRTPGQ). Residues 832–842 (DEYEFAYDDEP) show a composition bias toward acidic residues. One copy of the CTR2-1 repeat lies at 842-849 (PSPSPQGY). The 10 X 8 AA approximate tandem repeats of P-[TS]-P-S-P-[QA]-[SG]-Y, motif CTR2 stretch occupies residues 842-948 (PSPSPQGYGG…ASPSPSPVGY (107 aa)). One copy of the CTR2-2; approximate repeat lies at 852 to 860 (TPNPQTPGY). A compositionally biased stretch (pro residues) spans 855-864 (PQTPGYPEVP). One copy of the CTR2-3; approximate repeat lies at 861–867 (PEVPSPQ). A compositionally biased stretch (polar residues) spans 866-888 (PQVNPQYNPQTPGTPAMYNTDQY). One copy of the CTR2-4; half-length repeat lies at 879 to 883 (TPAMY). The CTR2-5; approximate repeat unit spans residues 894-900 (PSPQGSY). Residues 894 to 909 (PSPQGSYQPSPSPQSY) are compositionally biased toward low complexity. Residues 902–909 (PSPSPQSY) form a CTR2-6 repeat. The stretch at 914 to 919 (PSPVGY) is one CTR2-7; approximate repeat. A CTR2-8 repeat occupies 922 to 928 (THSPASY). The CTR2-9 repeat unit spans residues 930–937 (PTPSPMAY). The CTR2-10 repeat unit spans residues 941 to 948 (PSPSPVGY).

Belongs to the SPT5 family. As to quaternary structure, interacts with SUPT4H1 to form the DSIF complex. DSIF interacts with RNA polymerase II and with the positive transcription elongation factor b complex (P-TEFb complex), which is composed of CDK9 and cyclin-T. Post-translationally, phosphorylated. Phosphorylation by P-TEFb (CDK9) at Thr residues of the C-terminal repeats alleviates transcriptional pausing and promotes transcription elongation.

It is found in the nucleus. Functionally, component of the DRB sensitivity-inducing factor complex (DSIF complex), which regulates mRNA processing and transcription elongation by RNA polymerase II. DSIF positively regulates mRNA capping by stimulating the mRNA guanylyltransferase activity of RNGTT/CAP1A. DSIF also acts cooperatively with the negative elongation factor complex (NELF complex) to enhance transcriptional pausing at sites proximal to the promoter. Transcriptional pausing may facilitate the assembly of an elongation competent RNA polymerase II complex. DSIF and NELF promote pausing by inhibition of the transcription elongation factor TFIIS/S-II. TFIIS/S-II binds to RNA polymerase II at transcription pause sites and stimulates the weak intrinsic nuclease activity of the enzyme. Cleavage of blocked transcripts by RNA polymerase II promotes the resumption of transcription from the new 3' terminus and may allow repeated attempts at transcription through natural pause sites. Following phosphorylation by CDK9, DSIF can also positively regulate transcriptional elongation. Regulation of transcriptional elongation by this protein is required for the expression of genes which control neuronal development. This is Transcription elongation factor SPT5 (supt5h) from Danio rerio (Zebrafish).